A 395-amino-acid polypeptide reads, in one-letter code: GDP-mannose 4,6 dehydratase (395 aa).

Polar residues-rich tracts occupy residues 1–13 (MLNTRLIAMSTSD) and 24–36 (ESSSNGSKDQNGT). The interval 1-44 (MLNTRLIAMSTSDGAPETKKQRPESSSNGSKDQNGTEAGAEGDS) is disordered. NADP(+) contacts are provided by residues 53-58 (GITGQD), 109-110 (DM), 131-135 (LAAQS), and Y146. Residue T178 is part of the active site. Catalysis depends on nucleophile residues E180 and Y202. The NADP(+) site is built by K206, H232, and R237.

It belongs to the NAD(P)-dependent epimerase/dehydratase family. GDP-mannose 4,6-dehydratase subfamily. The cofactor is NADP(+).

The enzyme catalyses GDP-alpha-D-mannose = GDP-4-dehydro-alpha-D-rhamnose + H2O. It functions in the pathway nucleotide-sugar biosynthesis; GDP-L-fucose biosynthesis via de novo pathway; GDP-L-fucose from GDP-alpha-D-mannose: step 1/2. Functionally, catalyzes the conversion of GDP-D-mannose to GDP-4-dehydro-6-deoxy-D-mannose (also known as GDP-4-keto-6-deoxy-D-mannose or GDP-4-dehydro-alpha-D-rhamnose), an essential step in the synthesis of GDP-fucose from GDP-mannose. This Drosophila melanogaster (Fruit fly) protein is GDP-mannose 4,6 dehydratase (Gmd).